A 178-amino-acid polypeptide reads, in one-letter code: MDWPHSLLFLLAISIFLGPSQPRNTKGKRKGQVRPGPLAPGPHQVPLDLVSRVKPYARMEEYERNLGEMVAQLRNSSEPAKRRCEVNLQLWLSNKRSLSPWGYSINHDPSRIPADLPEARCLCLGCVNPFTMQEDRSMVSVPVFSQVPVRRRLCPPPPRPGPCRHRVVMETIAVGCTC.

A signal peptide spans 1–22; it reads MDWPHSLLFLLAISIFLGPSQP. Positions 21–44 are disordered; sequence QPRNTKGKRKGQVRPGPLAPGPHQ. The N-linked (GlcNAc...) asparagine glycan is linked to Asn-75. Cystine bridges form between Cys-121-Cys-176 and Cys-126-Cys-178.

The protein belongs to the IL-17 family.

The protein localises to the secreted. Its function is as follows. Stimulates the release of tumor necrosis factor alpha and IL-1-beta from the monocytic cell line THP-1. The sequence is that of Interleukin-17B (IL17B) from Mesocricetus auratus (Golden hamster).